We begin with the raw amino-acid sequence, 215 residues long: Large ribosomal subunit protein bL25 (215 aa).

Residues 160-215 (GDLPLPEGSELVTEPEETVMSVVAPETEEEPDTEEDEEGEEDVEEESEEEEEESEE) form a disordered region. Residues 185–215 (ETEEEPDTEEDEEGEEDVEEESEEEEEESEE) are compositionally biased toward acidic residues.

This sequence belongs to the bacterial ribosomal protein bL25 family. CTC subfamily. As to quaternary structure, part of the 50S ribosomal subunit; part of the 5S rRNA/L5/L18/L25 subcomplex. Contacts the 5S rRNA. Binds to the 5S rRNA independently of L5 and L18.

Its function is as follows. This is one of the proteins that binds to the 5S RNA in the ribosome where it forms part of the central protuberance. The sequence is that of Large ribosomal subunit protein bL25 from Natranaerobius thermophilus (strain ATCC BAA-1301 / DSM 18059 / JW/NM-WN-LF).